Reading from the N-terminus, the 2496-residue chain is Non-reducing polyketide synthase adrD (2496 aa).

The segment at 15–254 (LVFGPQIAEI…HHASHITAVQ (240 aa)) is N-terminal acylcarrier protein transacylase domain (SAT). Residues 387–808 (ATPIAITGMG…GSNAALVVKQ (422 aa)) form the Ketosynthase family 3 (KS3) domain. Catalysis depends on for beta-ketoacyl synthase activity residues cysteine 552, histidine 687, and histidine 726. Positions 914–1223 (LCFGGQNGNE…QSLDLGGPQG (310 aa)) are malonyl-CoA:ACP transacylase (MAT) domain. The active-site For acyl/malonyl transferase activity is the serine 1001. Positions 1295 to 1423 (KEFVQLLTKQ…GEISLHPFGQ (129 aa)) are N-terminal hotdog fold. A PKS/mFAS DH domain is found at 1295–1602 (KEFVQLLTKQ…FTSVSIAGLA (308 aa)). A product template (PT) domain region spans residues 1296-1601 (EFVQLLTKQP…EFTSVSIAGL (306 aa)). Histidine 1326 serves as the catalytic Proton acceptor; for dehydratase activity. The segment at 1451 to 1602 (ESSGLKGFAV…FTSVSIAGLA (152 aa)) is C-terminal hotdog fold. Residue aspartate 1509 is the Proton donor; for dehydratase activity of the active site. A compositionally biased stretch (basic and acidic residues) spans 1615–1629 (EKASPDLSLRNDSKV). The segment at 1615–1645 (EKASPDLSLRNDSKVDVNPTPQNTAPVVQPT) is disordered. The segment covering 1633–1645 (PTPQNTAPVVQPT) has biased composition (polar residues). Residues 1652–1726 (PGYFVVVQEM…ALVQTIFPDA (75 aa)) enclose the Carrier domain. At serine 1686 the chain carries O-(pantetheine 4'-phosphoryl)serine. The interval 1888–2121 (QHRSEHHLLK…GFQWVDWTHN (234 aa)) is methyltransferase (CMeT) domain. Residues 2151–2496 (RVMNEETVPY…YEFLRDHVRY (346 aa)) form a thioesterase (TE) domain region. Residues serine 2274 and aspartate 2433 each act as for thioesterase activity in the active site.

The enzyme catalyses 3 malonyl-CoA + acetyl-CoA + 2 S-adenosyl-L-methionine = 3,5-dimethylorsellinate + 2 S-adenosyl-L-homocysteine + 3 CO2 + 4 CoA. It participates in secondary metabolite biosynthesis; terpenoid biosynthesis. In terms of biological role, non-reducing polyketide synthase; part of the gene cluster that mediates the biosynthesis of andrastins, meroterpenoid compounds that exhibit inhibitory activity against ras farnesyltransferase, suggesting that they could be promising leads for antitumor agents. The first step of the pathway is the synthesis of 3,5-dimethylorsellinic acid (DMOA) by the polyketide synthase adrD via condensation of one acetyl-CoA starter unit with 3 malonyl-CoA units and 2 methylations. DMAO is then converted to farnesyl-DMAO by the prenyltransferase adrG. The methyltransferase adrK catalyzes the methylation of the carboxyl group of farnesyl-DMAO to farnesyl-DMAO methyl ester which is further converted to epoxyfarnesyl-DMAO methyl ester by the FAD-dependent monooxygenase adrH. The terpene cyclase adrI then catalyzes the carbon skeletal rearrangement to generate the andrastin E, the first compound in the pathway having the andrastin scaffold, with the tetracyclic ring system. The post-cyclization tailoring enzymes adrF, adrE, adrJ, and adrA, are involved in the conversion of andrastin E into andrastin A. The short chain dehydrogenase adrF is responsible for the oxidation of the C-3 a hydroxyl group of andrastin E to yield the corresponding ketone, andrastin D. The ketoreductase adrE stereoselectively reduces the carbonyl moiety to reverse the stereochemistry of the C-3 position to yield andrastin F. The acetyltransferase adrJ is the acetyltransferase that attaches the acetyl group to the C-3 hydroxyl group of andrastin F to yield andrastin C. Finally, the cytochrome P450 monooxygenase adrA catalyzes two sequential oxidation reactions of the C-23 methyl group, to generate the corresponding alcohol andrastin B, and aldehyde andrastin A. This Penicillium rubens (strain ATCC 28089 / DSM 1075 / NRRL 1951 / Wisconsin 54-1255) (Penicillium chrysogenum) protein is Non-reducing polyketide synthase adrD.